The primary structure comprises 333 residues: Cap-specific mRNA (nucleoside-2'-O-)-methyltransferase (333 aa).

Y22 contributes to the mRNA binding site. 8 residues coordinate S-adenosyl-L-methionine: Q39, Y66, G68, G72, D95, R97, V116, and D138. The tract at residues 169–249 (PVASSLKWRC…NKIVRNKVVI (81 aa)) is binding to NPH-I. K175 (for methyltransferase activity) is an active-site residue. MRNA is bound by residues 177–180 (RCPF), D182, 205–207 (SAE), and E233. Positions 305 to 320 (SHEPIQRKISSKDSMS) are enriched in basic and acidic residues. The disordered stretch occupies residues 305-333 (SHEPIQRKISSKDSMSKNRNSKRSVRGNK). The span at 323 to 333 (RNSKRSVRGNK) shows a compositional bias: basic residues.

The protein belongs to the class I-like SAM-binding methyltransferase superfamily. Poxvirus/kinetoplastid 2'-O-MTase family. As to quaternary structure, interacts with poly(A) polymerase catalytic subunit OPG063. Interacts with OPG109 and OPG123; these interactions might help linking transcription to capping and polyadenylation.

The protein resides in the virion. It catalyses the reaction a 5'-end (N(7)-methyl 5'-triphosphoguanosine)-ribonucleoside in mRNA + S-adenosyl-L-methionine = a 5'-end (N(7)-methyl 5'-triphosphoguanosine)-(2'-O-methyl-ribonucleoside) in mRNA + S-adenosyl-L-homocysteine + H(+). Its function is as follows. Displays methyltransferase, positive regulation of the poly(A) polymerase and transcription elongation activities. Involved in the modification of both mRNA ends and in intermediate and late gene positive transcription elongation. At the mRNAs 5' end, methylates the ribose 2' OH group of the first transcribed nucleotide, thereby producing a 2'-O-methylpurine cap. At the 3' end, functions as a processivity factor which stimulates the activity of the viral poly(A) polymerase OPG063 that creates mRNA's poly(A) tail. In the presence of OPG102, OPG063 does not dissociate from the RNA allowing tail elongation to around 250 adenylates. The protein is Cap-specific mRNA (nucleoside-2'-O-)-methyltransferase (OPG102) of Cynomys gunnisoni (Gunnison's prairie dog).